The sequence spans 162 residues: Protein A49 (162 aa).

Belongs to the poxviridae A49 protein family.

The sequence is that of Protein A49 from Homo sapiens (Human).